The primary structure comprises 178 residues: MEHNSISCANLLRKLFSGSFFEDKIIDFLATTLDDQAGSSEIDFKLLLTISDDFFSVISEKNFLMIESEAHKIDSPFPLKCVRFPKLISELSDGGSMRAKNKKALGLFVKNSLSTFGLYTDKKWEKVLIETKTFDHKKRVSYDDTIKITWYTRNDLVYLIVLTLKYLLLNQKDIIRNN.

It belongs to the mimivirus L114/R131 family.

This is an uncharacterized protein from Acanthamoeba polyphaga mimivirus (APMV).